Reading from the N-terminus, the 247-residue chain is MPMAQMTQNPVFVAIDTTVVGDATTLAARLHDEVGGIKLGLEFFARNGHKGVKEVCRAGALPLFLDLKFHDIPNTVAGAVRAVMPLAPALLNVHACGGRAMMIAAREAAQSEALALGIAPPKMIAVTVLTSMDDDDLGGTGVAGGVLDQVRRLAALTRDAGLDGVVCSAREARVLRADLGDDFLLVTPGVRPLWSTTNDQKRVVTPQEAMAEGADVLVIGRPITGATDPAQAARLIAGEIVGWDVGI.

Residues D16, K38, D66–T75, T130, R191, Q200, G220, and R221 each bind substrate. K68 functions as the Proton donor in the catalytic mechanism.

It belongs to the OMP decarboxylase family. Type 1 subfamily. As to quaternary structure, homodimer.

The catalysed reaction is orotidine 5'-phosphate + H(+) = UMP + CO2. The protein operates within pyrimidine metabolism; UMP biosynthesis via de novo pathway; UMP from orotate: step 2/2. Functionally, catalyzes the decarboxylation of orotidine 5'-monophosphate (OMP) to uridine 5'-monophosphate (UMP). The chain is Orotidine 5'-phosphate decarboxylase from Rhodospirillum rubrum (strain ATCC 11170 / ATH 1.1.1 / DSM 467 / LMG 4362 / NCIMB 8255 / S1).